Reading from the N-terminus, the 359-residue chain is Heme A synthase (359 aa).

6 consecutive transmembrane segments (helical) span residues 23-43, 85-105, 109-129, 137-157, 172-192, and 212-232; these read AVAFWLWSLAVLVFLMVVLGG, YAALFPDMDLAGFKFIFFFEW, LLGRLIGVATALPLLFFWLRG, LKLLGLLALGGLQGFVGWWMV, LAIHLILASLTFCFIVWLAAS, and AGLILLAILVQIGLGALVAGL. Heme is bound at residue His-276. Transmembrane regions (helical) follow at residues 278 to 298, 308 to 328, and 329 to 349; these read MVAYLVLGLTLLQVFWTSGTL, IALLGLVLAQVILGILTLVLV, and VPLWAGLLHQAFAMLVLGMAV. His-337 contacts heme.

Belongs to the COX15/CtaA family. Type 2 subfamily. As to quaternary structure, interacts with CtaB. Heme b serves as cofactor.

The protein localises to the cell membrane. It carries out the reaction Fe(II)-heme o + 2 A + H2O = Fe(II)-heme a + 2 AH2. The protein operates within porphyrin-containing compound metabolism; heme A biosynthesis; heme A from heme O: step 1/1. Its function is as follows. Catalyzes the conversion of heme O to heme A by two successive hydroxylations of the methyl group at C8. The first hydroxylation forms heme I, the second hydroxylation results in an unstable dihydroxymethyl group, which spontaneously dehydrates, resulting in the formyl group of heme A. This chain is Heme A synthase, found in Beijerinckia indica subsp. indica (strain ATCC 9039 / DSM 1715 / NCIMB 8712).